The primary structure comprises 337 residues: MKKTLIALSVSAAAMATGVNAAELYNQDGTSLEMGGRAEARLSMKDGDAQDNSRIRLNFLGTQAINDNLYGVGFWEGEFTTNEQGGVDGDVNKDSSNLDTRYAYAGLGGAWGEFTYGKNEGALGVITDFTDIMAYHGNSAADKLAVADRSDNMMSYKGQFENLSVKASYRFADRKLNDAGTEYTDNGQDGYSLSAIYAVADTGLELGAGYADQDEANEYMLAASYTMGDLYFAGIFTDGEKAKTEGDYTGYELAGAYTLGQTVFTTTYNNAETNNETSANNFAVDASYYFKPNFRGYVSYNFNLIDSGDKLGKVGGNTTASKADAEDELALGLRYDF.

The first 21 residues, 1–21 (MKKTLIALSVSAAAMATGVNA), serve as a signal peptide directing secretion.

It belongs to the Gram-negative porin family. As to quaternary structure, homotrimer.

The protein localises to the cell outer membrane. In terms of biological role, forms pores that allow passive diffusion of small molecules across the outer membrane. The polypeptide is Outer membrane protein U (ompU) (Vibrio parahaemolyticus serotype O3:K6 (strain RIMD 2210633)).